Here is a 207-residue protein sequence, read N- to C-terminus: Guanylate kinase (207 aa).

Positions 4-184 (GTLYIVSAPS…ALMDFKAIIR (181 aa)) constitute a Guanylate kinase-like domain. Residue 11–18 (APSGAGKS) coordinates ATP.

It belongs to the guanylate kinase family.

The protein resides in the cytoplasm. It carries out the reaction GMP + ATP = GDP + ADP. The catalysed reaction is dZMP + ATP = dZDP + ADP. It participates in purine metabolism. Essential for recycling GMP and indirectly, cGMP. In terms of biological role, (Microbial infection) Catalyzes the phosphorylation of dZMP to dZDP, when the bacterium is infected by a phage that produces the substrate for the synthesis of dZTP (2- amino-2'-deoxyadenosine 5'-triphosphate), which is then used by the phage as a DNA polymerase substrate. The polypeptide is Guanylate kinase (gmk) (Vibrio cholerae serotype O1 (strain ATCC 39315 / El Tor Inaba N16961)).